The primary structure comprises 555 residues: Formate--tetrahydrofolate ligase (555 aa).

Position 65-72 (65-72 (TPAGEGKT)) interacts with ATP.

The protein belongs to the formate--tetrahydrofolate ligase family.

It catalyses the reaction (6S)-5,6,7,8-tetrahydrofolate + formate + ATP = (6R)-10-formyltetrahydrofolate + ADP + phosphate. The protein operates within one-carbon metabolism; tetrahydrofolate interconversion. In Thermoanaerobacter pseudethanolicus (strain ATCC 33223 / 39E) (Clostridium thermohydrosulfuricum), this protein is Formate--tetrahydrofolate ligase.